We begin with the raw amino-acid sequence, 126 residues long: Methylglyoxal synthase (126 aa).

The MGS-like domain occupies 1 to 126; sequence MAGSKCLALI…AIKLLPTLEA (126 aa). Substrate is bound by residues H12, K16, 38 to 41, and 59 to 60; these read TGTT and SG. D65 acts as the Proton donor/acceptor in catalysis. A substrate-binding site is contributed by H92.

The protein belongs to the methylglyoxal synthase family.

It catalyses the reaction dihydroxyacetone phosphate = methylglyoxal + phosphate. Its function is as follows. Catalyzes the formation of methylglyoxal from dihydroxyacetone phosphate. The sequence is that of Methylglyoxal synthase from Rhizobium etli (strain ATCC 51251 / DSM 11541 / JCM 21823 / NBRC 15573 / CFN 42).